A 144-amino-acid polypeptide reads, in one-letter code: Large ribosomal subunit protein uL11 (144 aa).

The protein belongs to the universal ribosomal protein uL11 family. Part of the ribosomal stalk of the 50S ribosomal subunit. Interacts with L10 and the large rRNA to form the base of the stalk. L10 forms an elongated spine to which L12 dimers bind in a sequential fashion forming a multimeric L10(L12)X complex. Contacts the CTC protein (RL25). One or more lysine residues are methylated.

Functionally, forms part of the ribosomal stalk which helps the ribosome interact with GTP-bound translation factors. The polypeptide is Large ribosomal subunit protein uL11 (Deinococcus radiodurans (strain ATCC 13939 / DSM 20539 / JCM 16871 / CCUG 27074 / LMG 4051 / NBRC 15346 / NCIMB 9279 / VKM B-1422 / R1)).